Consider the following 489-residue polypeptide: mRNA cleavage and polyadenylation factor CLP1 (489 aa).

ATP contacts are provided by residues E28 and 152-157 (YSGKTT).

Belongs to the Clp1 family. Clp1 subfamily. As to quaternary structure, component of a pre-mRNA cleavage factor complex. Interacts directly with PCF11.

The protein resides in the nucleus. In terms of biological role, required for endonucleolytic cleavage during polyadenylation-dependent pre-mRNA 3'-end formation. This Candida albicans (strain SC5314 / ATCC MYA-2876) (Yeast) protein is mRNA cleavage and polyadenylation factor CLP1.